We begin with the raw amino-acid sequence, 640 residues long: Threonine--tRNA ligase (640 aa).

The TGS domain maps to 1-60 (MKITFPDGAVKEFEPGVSTADIAASISPGLKKKALAGKLNGELLDLVTPIHEDGAIEIVT). A catalytic region spans residues 241–538 (DHRKLGKELE…LIEEYKGAFP (298 aa)). Zn(2+) contacts are provided by Cys334, His385, and His515.

The protein belongs to the class-II aminoacyl-tRNA synthetase family. Homodimer. Requires Zn(2+) as cofactor.

The protein localises to the cytoplasm. The enzyme catalyses tRNA(Thr) + L-threonine + ATP = L-threonyl-tRNA(Thr) + AMP + diphosphate + H(+). In terms of biological role, catalyzes the attachment of threonine to tRNA(Thr) in a two-step reaction: L-threonine is first activated by ATP to form Thr-AMP and then transferred to the acceptor end of tRNA(Thr). Also edits incorrectly charged L-seryl-tRNA(Thr). The sequence is that of Threonine--tRNA ligase from Listeria welshimeri serovar 6b (strain ATCC 35897 / DSM 20650 / CCUG 15529 / CIP 8149 / NCTC 11857 / SLCC 5334 / V8).